The chain runs to 589 residues: Probable cytochrome P450 49a1 (589 aa).

Positions 56 to 90 (TGESSNPKKLNVSQQPVTSVATTRTTASSLPAETT) are disordered. The segment covering 57 to 71 (GESSNPKKLNVSQQP) has biased composition (polar residues). Residues 72-84 (VTSVATTRTTASS) are compositionally biased toward low complexity. Residue cysteine 536 participates in heme binding.

This sequence belongs to the cytochrome P450 family. Requires heme as cofactor.

It localises to the endoplasmic reticulum membrane. Its subcellular location is the microsome membrane. Functionally, may be involved in the metabolism of insect hormones and in the breakdown of synthetic insecticides. The protein is Probable cytochrome P450 49a1 (Cyp49a1) of Drosophila melanogaster (Fruit fly).